The following is a 434-amino-acid chain: Probable transcription factor HMS1 (434 aa).

The bHLH domain maps to 266–341 (TGRVSHNIIE…TKSIEYICHL (76 aa)). The interval 365 to 434 (HLTEPSQPLS…DMDFNNAGDF (70 aa)) is disordered. Composition is skewed to polar residues over residues 368–382 (EPSQ…SEQV) and 402–423 (PLHN…TNNS).

As to quaternary structure, interacts with the G1/S-specific cyclin PCL1. Phosphorylated by the cyclin-CDK complex PCL1-PHO85.

It localises to the nucleus. In terms of biological role, involved in exit from mitosis and pseudohyphal differentiation. In Saccharomyces cerevisiae (strain ATCC 204508 / S288c) (Baker's yeast), this protein is Probable transcription factor HMS1 (HMS1).